The primary structure comprises 256 residues: uncharacterized protein (256 aa).

3 helical membrane-spanning segments follow: residues 42 to 62, 73 to 93, and 108 to 128; these read LIALTVLSNLIIISFVLIWFF, FFTLFIPFFISLLVAIFLIFL, and WLFLWTCVFSSLPIFNLWLIV.

The protein localises to the cell membrane. This is an uncharacterized protein from Mycoplasma genitalium (strain ATCC 33530 / DSM 19775 / NCTC 10195 / G37) (Mycoplasmoides genitalium).